The sequence spans 435 residues: Rho GTPase-activating protein 4 (435 aa).

Residues Met1 to Glu59 form a disordered region. Low complexity predominate over residues Ser7–Ser23. A CRIB domain is found at Ile93 to Thr106. Positions Val138–Lys319 constitute a Rho-GAP domain. Residues Ser321–Ser343 are disordered.

Its function is as follows. Acts as a GTPase activator for the Rac-type GTPase by converting it to an inactive GDP-bound state. Acts as a negative feedback regulator in tolerance to oxygen deprivation which requires ARAC4/ROP2. This is Rho GTPase-activating protein 4 (ROPGAP4) from Arabidopsis thaliana (Mouse-ear cress).